Reading from the N-terminus, the 352-residue chain is Adenosine deaminase (352 aa).

Alanine 2 carries the post-translational modification N-acetylalanine. The Zn(2+) site is built by histidine 15 and histidine 17. Histidine 17 and aspartate 19 together coordinate substrate. The residue at position 54 (lysine 54) is an N6-acetyllysine. Glycine 184 serves as a coordination point for substrate. A Zn(2+)-binding site is contributed by histidine 214. Catalysis depends on glutamate 217, which acts as the Proton donor. Position 232 is an N6-acetyllysine (lysine 232). Aspartate 295 serves as a coordination point for Zn(2+). Aspartate 296 is a binding site for substrate.

The protein belongs to the metallo-dependent hydrolases superfamily. Adenosine and AMP deaminases family. In terms of assembly, interacts with DPP4 (via extracellular domain). Interacts with PLG (via Kringle 4 domain); the interaction stimulates PLG activation when in complex with DPP4. Zn(2+) serves as cofactor. In terms of tissue distribution, detected in brain neurons in the median emninence (at protein level). Expressed in secondary deciduum (at protein level). Found in all tissues, occurs in large amounts in T-lymphocytes and, at the time of weaning, in gastrointestinal tissues.

Its subcellular location is the cell membrane. The protein resides in the cell junction. It is found in the cytoplasmic vesicle lumen. It localises to the cytoplasm. The protein localises to the lysosome. The enzyme catalyses adenosine + H2O + H(+) = inosine + NH4(+). It catalyses the reaction 2'-deoxyadenosine + H2O + H(+) = 2'-deoxyinosine + NH4(+). The catalysed reaction is cordycepin + H2O + H(+) = 3'-deoxyinosine + NH4(+). In terms of biological role, catalyzes the hydrolytic deamination of adenosine and 2-deoxyadenosine. Plays an important role in purine metabolism and in adenosine homeostasis. Modulates signaling by extracellular adenosine, and so contributes indirectly to cellular signaling events. Acts as a positive regulator of T-cell coactivation, by binding DPP4. Its interaction with DPP4 regulates lymphocyte-epithelial cell adhesion. Enhances dendritic cell immunogenicity by affecting dendritic cell costimulatory molecule expression and cytokines and chemokines secretion. Enhances CD4+ T-cell differentiation and proliferation. Acts as a positive modulator of adenosine receptors ADORA1 and ADORA2A, by enhancing their ligand affinity via conformational change. Stimulates plasminogen activation. Plays a role in male fertility. Plays a protective role in early postimplantation embryonic development. Also responsible for the deamination of cordycepin (3'-deoxyadenosine), a fungal natural product that shows antitumor, antibacterial, antifungal, antivirus, and immune regulation properties. This Mus musculus (Mouse) protein is Adenosine deaminase (Ada).